The sequence spans 513 residues: ATP synthase subunit alpha (513 aa).

G170–T177 serves as a coordination point for ATP.

The protein belongs to the ATPase alpha/beta chains family. In terms of assembly, F-type ATPases have 2 components, CF(1) - the catalytic core - and CF(0) - the membrane proton channel. CF(1) has five subunits: alpha(3), beta(3), gamma(1), delta(1), epsilon(1). CF(0) has three main subunits: a(1), b(2) and c(9-12). The alpha and beta chains form an alternating ring which encloses part of the gamma chain. CF(1) is attached to CF(0) by a central stalk formed by the gamma and epsilon chains, while a peripheral stalk is formed by the delta and b chains.

It localises to the cell inner membrane. It carries out the reaction ATP + H2O + 4 H(+)(in) = ADP + phosphate + 5 H(+)(out). Functionally, produces ATP from ADP in the presence of a proton gradient across the membrane. The alpha chain is a regulatory subunit. This chain is ATP synthase subunit alpha, found in Teredinibacter turnerae (strain ATCC 39867 / T7901).